We begin with the raw amino-acid sequence, 54 residues long: Putative neurotoxin-I (54 aa).

3 disulfides stabilise this stretch: cysteine 20/cysteine 42, cysteine 28/cysteine 51, and cysteine 32/cysteine 53.

In terms of tissue distribution, expressed by the venom gland.

The protein resides in the secreted. The protein is Putative neurotoxin-I of Lychas mucronatus (Chinese swimming scorpion).